A 143-amino-acid chain; its full sequence is uncharacterized protein (143 aa).

Helical transmembrane passes span 16–36 (LIFA…IFVW) and 48–68 (ICYI…FIYV). N-linked (GlcNAc...) asparagine; by host glycosylation is present at N71.

The protein localises to the membrane. This is an uncharacterized protein from Acanthamoeba polyphaga (Amoeba).